The primary structure comprises 58 residues: Ribosome modulation factor (58 aa).

Residues 1-14 (MKRQKRDKLTRAHS) show a composition bias toward basic residues. The segment at 1 to 25 (MKRQKRDKLTRAHSKGYQAGISGRS) is disordered.

The protein belongs to the ribosome modulation factor family.

It is found in the cytoplasm. During stationary phase, converts 70S ribosomes to an inactive dimeric form (100S ribosomes). The protein is Ribosome modulation factor of Alteromonas naphthalenivorans.